Reading from the N-terminus, the 437-residue chain is Proline--tRNA ligase (437 aa).

This sequence belongs to the class-II aminoacyl-tRNA synthetase family. ProS type 2 subfamily. As to quaternary structure, homodimer.

The protein localises to the cytoplasm. The catalysed reaction is tRNA(Pro) + L-proline + ATP = L-prolyl-tRNA(Pro) + AMP + diphosphate. Functionally, catalyzes the attachment of proline to tRNA(Pro) in a two-step reaction: proline is first activated by ATP to form Pro-AMP and then transferred to the acceptor end of tRNA(Pro). This chain is Proline--tRNA ligase, found in Acidiphilium cryptum (strain JF-5).